The following is a 344-amino-acid chain: Flavonoid 7-O-methyltransferase 1B (344 aa).

D211 contacts S-adenosyl-L-methionine. The active-site Proton acceptor is H249.

The protein belongs to the class I-like SAM-binding methyltransferase superfamily. Cation-independent O-methyltransferase family. Homodimer.

It carries out the reaction scutellarein + S-adenosyl-L-methionine = scutellarein 7-methyl ether + S-adenosyl-L-homocysteine. It catalyses the reaction 4',7,8-trihydroxyflavone + S-adenosyl-L-methionine = 4',8-dihydroxy-7-methoxyflavone + S-adenosyl-L-homocysteine. The catalysed reaction is isorhamnetin + S-adenosyl-L-methionine = rhamnacene + S-adenosyl-L-homocysteine + H(+). The enzyme catalyses kaempferol + S-adenosyl-L-methionine = kaempferol 7-methyl ether + S-adenosyl-L-homocysteine + H(+). It carries out the reaction (2S)-naringenin + S-adenosyl-L-methionine = (2S)-sakuranetin + S-adenosyl-L-homocysteine + H(+). It catalyses the reaction quercetin + S-adenosyl-L-methionine = rhamnetin + S-adenosyl-L-homocysteine + H(+). The catalysed reaction is apigenin + S-adenosyl-L-methionine = genkwanin + S-adenosyl-L-homocysteine + H(+). The enzyme catalyses luteolin + S-adenosyl-L-methionine = luteolin 7-methyl ether + S-adenosyl-L-homocysteine + H(+). Its pathway is flavonoid metabolism. Functionally, flavonoid 7-O-methyltransferase involved in the biosynthesis of polymethoxylated flavonoids natural products such as pebrellin, aroma compounds which contribute to the flavor of peppermint, and exhibit pharmacological activities such as anti-allergic, anti-oxidant, antibacterial, anti-proliferative, and anti-inflammatory effects. Catalyzes S-adenosylmethionine-dependent regioselective 7-O-methylation of flavonoids; active on various hydroxylated flavonoid substrates, including luteolin (LUT), quercetin, kaempferol, isorhamnetin, apigenin (API), scutellarein (6-hydroxy-apigenin, 6-OH-API, SCU), 7,8,4'-trihydroxy-flavone and naringenin (NAR), and, with a lower efficiency, 7,8,3',4'-tetrahydroxy-flavone, taxifolin and hesperetin. The polypeptide is Flavonoid 7-O-methyltransferase 1B (Mentha piperita (Peppermint)).